We begin with the raw amino-acid sequence, 299 residues long: ClpXP adapter protein SpxH (299 aa).

This sequence belongs to the SpxH family. Interacts with Spx. Interacts with SpxO/YuzO.

The protein resides in the cytoplasm. Irreversible aggregation upon several stress conditions prevents interaction with Spx and therefore leads to Spx stabilization. Inhibited by interaction with SpxO/YuzO. Functionally, adapter protein required for efficient degradation of Spx by ClpXP under non-stress conditions. Interaction with Spx stabilizes Spx and exposes the C-terminus of Spx for recognition and proteolysis by ClpXP. Is specific for Spx and does not enhance proteolysis by ClpCP protease. Probably binds 2 zinc ions. In Bacillus subtilis (strain 168), this protein is ClpXP adapter protein SpxH.